The primary structure comprises 151 residues: Aspartate 1-decarboxylase (151 aa).

S26 functions as the Schiff-base intermediate with substrate; via pyruvic acid in the catalytic mechanism. A Pyruvic acid (Ser) modification is found at S26. T58 contacts substrate. Y59 acts as the Proton donor in catalysis. 74-76 (GGA) contributes to the substrate binding site.

The protein belongs to the PanD family. Heterooctamer of four alpha and four beta subunits. Requires pyruvate as cofactor. Post-translationally, is synthesized initially as an inactive proenzyme, which is activated by self-cleavage at a specific serine bond to produce a beta-subunit with a hydroxyl group at its C-terminus and an alpha-subunit with a pyruvoyl group at its N-terminus.

Its subcellular location is the cytoplasm. The catalysed reaction is L-aspartate + H(+) = beta-alanine + CO2. Its pathway is cofactor biosynthesis; (R)-pantothenate biosynthesis; beta-alanine from L-aspartate: step 1/1. Functionally, catalyzes the pyruvoyl-dependent decarboxylation of aspartate to produce beta-alanine. The chain is Aspartate 1-decarboxylase from Crocosphaera subtropica (strain ATCC 51142 / BH68) (Cyanothece sp. (strain ATCC 51142)).